A 21-amino-acid polypeptide reads, in one-letter code: Pollen allergen Ole e 7 (21 aa).

This Olea europaea (Common olive) protein is Pollen allergen Ole e 7.